Here is a 461-residue protein sequence, read N- to C-terminus: Probable tubulin polyglutamylase TTLL9 (461 aa).

The tract at residues 1 to 21 (MSRPKNQNYKGHGLQKGKERE) is disordered. Residues 22 to 402 (QRASIRFKTT…EARLTGREKR (381 aa)) form the TTL domain. Residues K149 and 155–156 (QG) contribute to the ATP site. An a protein-binding site is contributed by Q155. The disordered stretch occupies residues 182-208 (SLEAQPARNTVNPSGSHDTRSSDDQKD). Over residues 188–197 (ARNTVNPSGS) the composition is skewed to polar residues. The segment covering 198–208 (HDTRSSDDQKD) has biased composition (basic and acidic residues). Residues 218–221 (QRYI) and 231–233 (KFD) contribute to the ATP site. An L-glutamate-binding site is contributed by R257. Residue 276-277 (TN) coordinates ATP. K294 serves as a coordination point for L-glutamate. Residues D348, E361, and N363 each coordinate Mg(2+). Residue K379 coordinates L-glutamate.

This sequence belongs to the tubulin--tyrosine ligase family. Requires Mg(2+) as cofactor.

Its subcellular location is the cytoplasm. It localises to the cytoskeleton. The protein localises to the cilium basal body. It is found in the flagellum axoneme. The enzyme catalyses (L-glutamyl)(n)-gamma-L-glutamyl-L-glutamyl-[protein] + L-glutamate + ATP = (L-glutamyl)(n+1)-gamma-L-glutamyl-L-glutamyl-[protein] + ADP + phosphate + H(+). Probable tubulin polyglutamylase that generates side chains of glutamate on the gamma-carboxyl group of specific glutamate residues within the C-terminal tail of target proteins. Similar to TTLL1, may acquire enzymatic activity only in complex with other proteins as it is most likely lacking domains important for autonomous activity. Mediates tubulin polyglutamylation which induces establishment of microtubule heterogeneity in sperm flagella, thereby playing a role in normal motile flagella axoneme structure and sperm flagella beating pattern. This is Probable tubulin polyglutamylase TTLL9 (TTLL9) from Bos taurus (Bovine).